Consider the following 488-residue polypeptide: Transcriptional coactivator YAP1 (488 aa).

Residues 1–21 (MEPAQQPPPQPAPQGPAPPSV) are compositionally biased toward pro residues. The tract at residues 1–47 (MEPAQQPPPQPAPQGPAPPSVSPAGTPAAPPAPPAGHQVVHVRGDSE) is disordered. At S46 the chain carries Phosphoserine. Residue T48 is modified to Phosphothreonine. Residues 71-85 (MRLRKLPDSFFKPPE) adopt a coiled-coil conformation. At K75 the chain carries N6-lactoyllysine. The tract at residues 76-99 (LPDSFFKPPEPKSHSRQASTDAGT) is disordered. Phosphoserine occurs at positions 90 and 94. T95 carries the post-translational modification Phosphothreonine. Phosphothreonine; by MAPK8 and MAPK9 is present on T104. A phosphoserine mark is found at S112, S113, S116, and S123. S149 carries the phosphoserine; by LATS1 and LATS2 modification. WW domains follow at residues 156 to 189 (VPLPAGWEMAKTSSGQRYFLNHNDQTTTWQDPRK) and 215 to 248 (GPLPDGWEQAMTQDGEVYYINHKNKTTSWLDPRL). Disordered regions lie at residues 261–293 (SAPVKQPPPLAPQSPQGGVLGGGSSNQQQQIQL) and 339–393 (TLEQ…SSYS). Position 274 is a phosphoserine (S274). The segment at 276-488 (QGGVLGGGSS…LDKESFLTWL (213 aa)) is transactivation domain. Positions 283–344 (GSSNQQQQIQ…SQLPTLEQDG (62 aa)) form a coiled coil. Over residues 348–376 (NAVSSPGMSQELRTMTTNSSDPFLNSGTY) the composition is skewed to polar residues. Residue S352 is modified to Phosphoserine; by MAPK8 and MAPK9. Phosphoserine occurs at positions 356, 366, 367, and 373. S382 is modified (phosphoserine; by LATS1 and LATS2). A compositionally biased stretch (polar residues) spans 384–393 (DSGLSMSSYS). Residues S385 and S388 each carry the phosphoserine; by CK1 modification. Y392 bears the Phosphotyrosine; by ABL1 mark. At T397 the chain carries Phosphothreonine; by MAPK8 and MAPK9.

This sequence belongs to the YAP1 family. As to quaternary structure, part of a complex when phosphorylated that contains DSG3, PKP1, YAP1 and YWHAG; the complex is required for localization of DSG3 and YAP1 to the cell membrane in keratinocytes. Binds to the SH3 domain of the YES kinase. Binds to WBP1 and WBP2. Binds, in vitro, through the WW1 domain, to neural isoforms of ENAH that contain the PPSY motif. The phosphorylated form interacts with YWHAB. Interacts (via WW domains) with LATS1 (via PPxY motif 2). Interacts with LATS2. Interacts (via WW domain 1) with isoform JM-A of ERBB4 (via PPxY motif 2). Interacts with TEAD1, TEAD2 and TEAD3. Interacts with TP73 and HCK. Interacts with RUNX1. Interacts with TEAD4. Interacts (via WW domains) with PTPN14 (via PPxY motif 2); this interaction leads to the cytoplasmic sequestration of YAP1 and inhibits its transcriptional coactivator activity. Interacts (when phosphorylated at Ser-112) with SMAD2, SMAD3 and WWTR1. Interacts with PRRG2 (via cytoplasmic domain). Interacts (via WW domains) with PRRG4 (via cytoplasmic domain). Interacts (phosphorylated) with CLDN18; the interaction sequesters YAP1 away from the nucleus and thereby restricts transcription of YAP1 target genes. Interacts with SMAD1. Interacts with AMOT; the interaction facilitates translocation of YAP1 to the cytoplasm and tight junctions. Interacts with AMOTL2, the interaction is required for ubiquitination of AMOTL2 and localization of YAP1 to tight junctions. In terms of processing, phosphorylated by LATS1 and LATS2; leading to cytoplasmic translocation and inactivation. Phosphorylated by ABL1; leading to YAP1 stabilization, enhanced interaction with TP73 and recruitment onto proapoptotic genes; in response to DNA damage. Phosphorylation at Ser-385 and Ser-388 by CK1 is triggered by previous phosphorylation at Ser-382 by LATS proteins and leads to YAP1 ubiquitination by SCF(beta-TRCP) E3 ubiquitin ligase and subsequent degradation. Phosphorylated at Thr-104, Ser-123, Ser-352 and Thr-397 by MAPK8/JNK1 and MAPK9/JNK2, which is required for the regulation of apoptosis by YAP1. Lactylation by AARS1 promotes nuclear localization and stabilization of YAP1, leading to increased Hippo signaling pathway. Delactylated by SIRT1. Post-translationally, ubiquitinated by SCF(beta-TRCP) E3 ubiquitin ligase. As to expression, isoforms lacking the transactivation domain seen in striatal neurons (at protein level). Ubiquitous. Isoform 2 is expressed at higher levels in the neural tissues. In the embryo, it is expressed in brain, eye, and the maxillary and frontonasal components of the primary palate.

The protein resides in the cytoplasm. The protein localises to the nucleus. It is found in the cell junction. Its subcellular location is the tight junction. It localises to the cell membrane. Functionally, transcriptional regulator with dual roles as a coactivator and corepressor. Critical downstream regulatory target in the Hippo signaling pathway, crucial for organ size control and tumor suppression by restricting proliferation and promoting apoptosis. The Hippo signaling pathway core involves a kinase cascade featuring STK3/MST2 and STK4/MST1, along with its regulatory partner SAV1, which phosphorylates and activates LATS1/2 in complex with their regulatory protein, MOB1. This activation leads to the phosphorylation and inactivation of the YAP1 oncoprotein and WWTR1/TAZ. Phosphorylation of YAP1 by LATS1/2 prevents its nuclear translocation, thereby regulating the expression of its target genes. The transcriptional regulation of gene expression requires TEAD transcription factors and modulates cell growth, anchorage-independent growth, and induction of epithelial-mesenchymal transition (EMT). Plays a key role in tissue tension and 3D tissue shape by regulating the cortical actomyosin network, acting via ARHGAP18, a Rho GTPase activating protein that suppresses F-actin polymerization. It also suppresses ciliogenesis by acting as a transcriptional corepressor of TEAD4 target genes AURKA and PLK1. In conjunction with WWTR1, regulates TGFB1-dependent SMAD2 and SMAD3 nuclear accumulation. Synergizes with WBP2 to enhance PGR activity. The chain is Transcriptional coactivator YAP1 (Yap1) from Mus musculus (Mouse).